A 234-amino-acid polypeptide reads, in one-letter code: Ribitol-5-phosphate cytidylyltransferase (234 aa).

Residues 7–10 (LAGG) and 79–85 (GSIVQKS) contribute to the CTP site.

This sequence belongs to the IspD/TarI cytidylyltransferase family. TarI subfamily.

It carries out the reaction D-ribitol 5-phosphate + CTP + H(+) = CDP-L-ribitol + diphosphate. It participates in cell wall biogenesis; poly(ribitol phosphate) teichoic acid biosynthesis. Its function is as follows. Catalyzes the transfer of the cytidylyl group of CTP to D-ribitol 5-phosphate. The chain is Ribitol-5-phosphate cytidylyltransferase from Lacticaseibacillus paracasei (strain ATCC 334 / BCRC 17002 / CCUG 31169 / CIP 107868 / KCTC 3260 / NRRL B-441) (Lactobacillus paracasei).